The primary structure comprises 328 residues: 2-oxoglutarate-dependent dioxygenase gloF (328 aa).

One can recognise a Fe2OG dioxygenase domain in the interval 175-289 (DTSELRMNHY…RYSVAYFGKP (115 aa)). The Fe cation site is built by His201, Asp203, and His261. Arg280 is a 2-oxoglutarate binding site.

Belongs to the iron/ascorbate-dependent oxidoreductase family. It depends on Fe(2+) as a cofactor.

The protein operates within mycotoxin biosynthesis. Functionally, 2-oxoglutarate-dependent dioxygenase; part of the gene cluster that mediates the biosynthesis of pneumocandins, lipohexapeptides of the echinocandin family that prevent fungal cell wall formation by non-competitive inhibition of beta-1,3-glucan synthase. The 10,12-dimethylmyristoyl side chain is synthesized by the reducing polyketide synthase gloL/GLPKS4. The thioesterase gloN/GLHYD exclusively interacts with gloL/GLPKS4 to maintain turnover of the polyketide side chain. The 10R,12S-dimethylmyristic acid is then transferred to the first thiolation domain of the nonribosomal peptide synthetase gloA/GLNRPS4 by the acyl-AMP ligase gloD/GLligase, followed by its acylation to L-ornithine to trigger elongation of the cyclic hexapeptide. L-ornithine, 4R-hydroxyl-L-proline (generated from L-proline by the dioxygenase gloF/GLOXY2), 3S-hydroxyl-L-homotyrosine (generated by gloG/GLHtyB, gloH/GLHtyA, gloI/GLHtyC, gloJ/GLHtyD and hydroxylated at C-3 by the dioxygenase gloM/GLOXY1), 3R-hydroxyl-L-glutamine (generated from L-glutamine probably by the dioxygenase gloE/GLOXY3) and 3S-hydroxyl-L-proline (generated from L-proline by the dioxygenase gloF/GLOXY2 to yield pneumocandin B0), or 3S-hydroxyl-4S-methyl-L-proline (generated from L-leucine by the dioxygenase gloC/GLOXY4 to yield pneumocandin A0) are sequentially added to the growing chain. The last C domain of gloA/GLNRPS4 is proposed to be responsible for cyclization by condensation to form the peptide bond between L-ornithine and 3S-hydroxyl-4S-methyl-L-proline (for pneumocandin A0) or 3S-hydroxyl-L-proline (for pneumocandin B0). Finally, the subsequent C-4 hydroxylation of 3S-hydroxyl-L-homotyrosine and L-ornithine dihydroxylation at C-4 and C-5 are performed by the cytochrome P450 monooxygenases gloP/GLP450-1 and gloO/GLP450-2, respectively. The sequence is that of 2-oxoglutarate-dependent dioxygenase gloF from Glarea lozoyensis (strain ATCC 20868 / MF5171).